We begin with the raw amino-acid sequence, 259 residues long: Enolase-phosphatase E1 (259 aa).

Asp-16 and Glu-18 together coordinate Mg(2+). Residues 151 to 152 (SS) and Lys-185 contribute to the substrate site. Asp-210 lines the Mg(2+) pocket.

It belongs to the HAD-like hydrolase superfamily. MasA/MtnC family. Monomer. Requires Mg(2+) as cofactor.

It localises to the cytoplasm. The protein resides in the nucleus. It catalyses the reaction 5-methylsulfanyl-2,3-dioxopentyl phosphate + H2O = 1,2-dihydroxy-5-(methylsulfanyl)pent-1-en-3-one + phosphate. It participates in amino-acid biosynthesis; L-methionine biosynthesis via salvage pathway; L-methionine from S-methyl-5-thio-alpha-D-ribose 1-phosphate: step 3/6. It functions in the pathway amino-acid biosynthesis; L-methionine biosynthesis via salvage pathway; L-methionine from S-methyl-5-thio-alpha-D-ribose 1-phosphate: step 4/6. Its function is as follows. Bifunctional enzyme that catalyzes the enolization of 2,3-diketo-5-methylthiopentyl-1-phosphate (DK-MTP-1-P) into the intermediate 2-hydroxy-3-keto-5-methylthiopentenyl-1-phosphate (HK-MTPenyl-1-P), which is then dephosphorylated to form the acireductone 1,2-dihydroxy-3-keto-5-methylthiopentene (DHK-MTPene). The polypeptide is Enolase-phosphatase E1 (enoph1) (Xenopus tropicalis (Western clawed frog)).